A 238-amino-acid chain; its full sequence is Ribonuclease 3 (238 aa).

One can recognise an RNase III domain in the interval 4–130 (IQTLFQTLNI…LFGAIYLDLG (127 aa)). E45 contributes to the Mg(2+) binding site. The active site involves D49. Residues D116 and E119 each coordinate Mg(2+). E119 is a catalytic residue. A DRBM domain is found at 154 to 222 (DFKTQLQEIV…AQQALSKVAK (69 aa)). Positions 215–238 (QALSKVAKPKDLLNNKGGKEKELQ) are disordered. Residues 222–238 (KPKDLLNNKGGKEKELQ) show a composition bias toward basic and acidic residues.

Belongs to the ribonuclease III family. In terms of assembly, homodimer. Mg(2+) serves as cofactor.

The protein localises to the cytoplasm. It catalyses the reaction Endonucleolytic cleavage to 5'-phosphomonoester.. In terms of biological role, digests double-stranded RNA. Involved in the processing of primary rRNA transcript to yield the immediate precursors to the large and small rRNAs (23S and 16S). Processes some mRNAs, and tRNAs when they are encoded in the rRNA operon. Processes pre-crRNA and tracrRNA of type II CRISPR loci if present in the organism. The polypeptide is Ribonuclease 3 (Onion yellows phytoplasma (strain OY-M)).